A 345-amino-acid polypeptide reads, in one-letter code: MYNFLEFFFFFITYTLFKSTFVQGKSSFPGHDVCKFEDQNFQTEFFLNVLKGDKLQNLKQEYEQYKKQSTLYTGFVIEKQYEYQVAPLQINNFLQVTFCKGGKPIWNHILPFQKDLDWAEPLCIPAQEDDTISQNSSVCFKFARVQKYTQRNVTLYFPNKFVGFVFVCNSSKTHPPTQNNFETIPLTPIISDDIRDYKISWSIKGRITKVVPYLHSLSIPMSKYEMLIHSDKNISNELEYKSLTSEFWKSYKNLRKFKNKEMSWINEINPMEQYDSSGNENVPNFHEKLDRTINRIAQNIERPHDALIRAIAAHNRNSNSGNITRRKYLRRKISKMLKNKIPLKN.

This is an uncharacterized protein from Saccharomyces cerevisiae (strain ATCC 204508 / S288c) (Baker's yeast).